Consider the following 1114-residue polypeptide: Putative surface protein SAV2496/SAV2497 (1114 aa).

A signal peptide spans 1-50 (MRDKKGPVNKRVDFLSNKLNKYSIRKFTVGTASILIGSLMYLGTQQEAEA). Disordered stretches follow at residues 76–116 (TNKD…EDTP), 440–473 (KFNP…NPLT), and 496–1088 (EYGP…TGLE). Basic and acidic residues-rich tracts occupy residues 96–116 (DTIE…EDTP), 451–461 (KVTREGQKGEK), 505–523 (GHRD…EEVP), 554–570 (SIVE…RKFN), and 579–589 (KVTREGQKGEK). In terms of domain architecture, G5 1 spans 419-501 (SAKNNNRIRK…NELTEYGPET (83 aa)). Residues 547-628 (YGPVKGDSIV…NELTEYGPET (82 aa)) form the G5 2 domain. Residues 590-604 (TTTPTLKNPLTGEII) are compositionally biased toward low complexity. Composition is skewed to basic and acidic residues over residues 605–618 (SKGE…KDPI), 632–650 (GHRD…EEVP), 681–697 (SIVE…RKFN), 706–716 (KVTREGQKGEK), 733–746 (SKGE…KDPI), 760–778 (GHRD…EEVP), 809–825 (SIVE…RKFN), 834–844 (KVTREGQKGEK), 861–874 (SKGE…KDPV), 918–929 (KVIEEPVDDVIK), and 946–965 (FETK…RVKQ). The region spanning 674–756 (YGPVKGDSIV…NELTEYGPET (83 aa)) is the G5 3 domain. Residues 802–884 (YGPVKGDSIV…NELTEFGGEK (83 aa)) form the G5 4 domain. Residues 930-1012 (HGPKTGTPET…DKIVEFGGEK (83 aa)) enclose the G5 5 domain. Residues 968-982 (QPGSKTITTPITVNP) show a composition bias toward polar residues. The segment covering 996 to 1026 (EITKQPVDKIVEFGGEKPKDPKGPENPEKPS) has biased composition (basic and acidic residues). An LPXTG sorting signal motif is present at residues 1082 to 1086 (LPKTG). Pentaglycyl murein peptidoglycan amidated threonine is present on threonine 1085. The propeptide at 1086–1114 (GLESTQKGLIFSSIIGIAGLMLLARRRKN) is removed by sortase.

It is found in the secreted. Its subcellular location is the cell wall. The chain is Putative surface protein SAV2496/SAV2497 from Staphylococcus aureus (strain Mu50 / ATCC 700699).